Consider the following 104-residue polypeptide: Large ribosomal subunit protein bL21 (104 aa).

Belongs to the bacterial ribosomal protein bL21 family. In terms of assembly, part of the 50S ribosomal subunit. Contacts protein L20.

Functionally, this protein binds to 23S rRNA in the presence of protein L20. In Francisella tularensis subsp. holarctica (strain FTNF002-00 / FTA), this protein is Large ribosomal subunit protein bL21.